The chain runs to 337 residues: uncharacterized protein (337 aa).

Low complexity predominate over residues Ser-42 to Ser-66. The tract at residues Ser-42–Phe-68 is disordered. An Exonuclease domain is found at Phe-129–Val-304. Mg(2+) is bound by residues Asp-133, Glu-135, and Asp-234. The active-site Proton acceptor is Glu-135. An AMP-binding site is contributed by Glu-135. His-291 acts as the Proton acceptor in catalysis. His-291 serves as a coordination point for AMP. Asp-296 lines the Mg(2+) pocket.

This is an uncharacterized protein from Arabidopsis thaliana (Mouse-ear cress).